The primary structure comprises 311 residues: Heparan sulfate glucosamine 3-O-sulfotransferase 1 (311 aa).

An N-terminal signal peptide occupies residues 1–20 (MTLLLLGAVLLVAQPQLVPS). Asparagine 52 carries N-linked (GlcNAc...) asparagine glycosylation. Residues 68–72 (KGGTR), arginine 151, and serine 159 contribute to the 3'-phosphoadenylyl sulfate site. N-linked (GlcNAc...) asparagine glycans are attached at residues asparagine 196, asparagine 246, and asparagine 253. Tyrosine 259 contacts 3'-phosphoadenylyl sulfate. A disulfide bridge links cysteine 260 with cysteine 269. A 3'-phosphoadenylyl sulfate-binding site is contributed by 274-278 (KGRAH).

The protein belongs to the sulfotransferase 1 family.

It localises to the golgi apparatus lumen. It carries out the reaction alpha-D-glucosaminyl-[heparan sulfate](n) + 3'-phosphoadenylyl sulfate = 3-sulfo-alpha-D-glucosaminyl-[heparan sulfate](n) + adenosine 3',5'-bisphosphate + H(+). Its function is as follows. Sulfotransferase that utilizes 3'-phospho-5'-adenylyl sulfate (PAPS) to catalyze the transfer of a sulfo group to position 3 of glucosamine residues in heparan. Catalyzes the rate limiting step in the biosynthesis of heparan sulfate (HSact). This modification is a crucial step in the biosynthesis of anticoagulant heparan sulfate as it completes the structure of the antithrombin pentasaccharide binding site. The protein is Heparan sulfate glucosamine 3-O-sulfotransferase 1 (Hs3st1) of Rattus norvegicus (Rat).